The chain runs to 736 residues: Prolyl 3-hydroxylase 3 (736 aa).

The signal sequence occupies residues 1–20 (MLRLLRPLLLLLLLPPPGSP). TPR repeat units lie at residues 37–70 (PDLL…QAAL), 154–187 (REPY…NPMH), and 216–249 (HWAA…SLAQ). The segment at 253–275 (CRADCEGPEEQQGAEEEEDGAAS) is disordered. Over residues 258–272 (EGPEEQQGAEEEEDG) the composition is skewed to acidic residues. A TPR 4 repeat occupies 316–349 (PNQLRRLHEAHAQVGNLSQAIENVLSVLLFYPED). N-linked (GlcNAc...) asparagine glycosylation is found at Asn-331 and Asn-462. The region spanning 561 to 675 (THLVCRSAIE…RCALALWHTW (115 aa)) is the Fe2OG dioxygenase domain. Fe cation is bound by residues His-584, Asp-586, and His-656. Arg-666 is a catalytic residue. A coiled-coil region spans residues 681–709 (EQEWIEAKELLQESQEEEEEEEEEMPSKD). Positions 689–736 (ELLQESQEEEEEEEEEMPSKDPSPEPPSRRHQRVQDKTGRAPRVREEL) are disordered. A compositionally biased stretch (acidic residues) spans 694–704 (SQEEEEEEEEE). Positions 721-736 (RVQDKTGRAPRVREEL) are enriched in basic and acidic residues. The Prevents secretion from ER motif lies at 733–736 (REEL).

The protein belongs to the leprecan family. In terms of assembly, identified in a complex with PLOD1 and P3H4. Fe cation is required as a cofactor. It depends on L-ascorbate as a cofactor. In terms of tissue distribution, detected in fetal cartilage (at protein level). Weak expression in heart, lung, ovary and skeletal muscle.

It localises to the endoplasmic reticulum. The catalysed reaction is L-prolyl-[collagen] + 2-oxoglutarate + O2 = trans-3-hydroxy-L-prolyl-[collagen] + succinate + CO2. Its function is as follows. Part of a complex composed of PLOD1, P3H3 and P3H4 that catalyzes hydroxylation of lysine residues in collagen alpha chains and is required for normal assembly and cross-linkling of collagen fibrils. Required for normal hydroxylation of lysine residues in type I collagen chains in skin, bone, tendon, aorta and cornea. Required for normal skin stability via its role in hydroxylation of lysine residues in collagen alpha chains and in collagen fibril assembly. Apparently not required for normal prolyl 3-hydroxylation on collagen chains, possibly because it functions redundantly with other prolyl 3-hydroxylases. This is Prolyl 3-hydroxylase 3 from Homo sapiens (Human).